The sequence spans 122 residues: MSSNDNSGIVNTCFLTTRLPAWAGVRQDEVGSDVNGLPIIPSNSMQIRSRAATTDAATEPSTRQGLNLLRSVTELNESIDELQQKMTELEKRLKIMEEKIEEIKLALANPLIENPHDGNFIV.

Residues 72-106 are a coiled coil; it reads VTELNESIDELQQKMTELEKRLKIMEEKIEEIKLA.

Belongs to the adenoviridae hexon-interlacing protein family. As to quaternary structure, homotrimer. Interacts with hexon protein; this interaction tethers the hexons together. Self-interacts with adjacent proteins. Interacts with kinesin light chain KLC1; this interaction leads to capsid disruption at the nuclear pore complex during virus entry into host cell.

It localises to the virion. The protein resides in the host nucleus. Structural component of the virion that acts as a cement protein on the capsid exterior and forms triskelion structures consisting of three molecules that stabilize three hexon trimers at the center of each icosahedral facet and fixes the peripentonal hexons. Dispensable for assembly. During virus entry, recruits the anterograde motor kinesin-1 to the capsid docked at the nuclear pore complex thereby subjecting the docked capsid to a pulling force. The resulting tension leads to capsid disruption, dispersion of capsid fragments toward cell periphery and eventually viral DNA entry into the host nucleus. In Tupaiidae (tree shrews), this protein is Hexon-interlacing protein.